A 527-amino-acid polypeptide reads, in one-letter code: Bifunctional purine biosynthesis protein PurH (527 aa).

The 149-residue stretch at 1–149 (MASDFLPVRR…KNFARVAVAT (149 aa)) folds into the MGS-like domain.

The protein belongs to the PurH family.

The enzyme catalyses (6R)-10-formyltetrahydrofolate + 5-amino-1-(5-phospho-beta-D-ribosyl)imidazole-4-carboxamide = 5-formamido-1-(5-phospho-D-ribosyl)imidazole-4-carboxamide + (6S)-5,6,7,8-tetrahydrofolate. It carries out the reaction IMP + H2O = 5-formamido-1-(5-phospho-D-ribosyl)imidazole-4-carboxamide. It functions in the pathway purine metabolism; IMP biosynthesis via de novo pathway; 5-formamido-1-(5-phospho-D-ribosyl)imidazole-4-carboxamide from 5-amino-1-(5-phospho-D-ribosyl)imidazole-4-carboxamide (10-formyl THF route): step 1/1. It participates in purine metabolism; IMP biosynthesis via de novo pathway; IMP from 5-formamido-1-(5-phospho-D-ribosyl)imidazole-4-carboxamide: step 1/1. This is Bifunctional purine biosynthesis protein PurH from Xanthomonas oryzae pv. oryzae (strain KACC10331 / KXO85).